The chain runs to 30 residues: MKNLRNRSFLTLLDFSRQEVEFLLTLSEDL.

It belongs to the aspartate/ornithine carbamoyltransferase superfamily. OTCase family.

It is found in the cytoplasm. It carries out the reaction carbamoyl phosphate + L-ornithine = L-citrulline + phosphate + H(+). It participates in amino-acid biosynthesis; L-arginine biosynthesis; L-arginine from L-ornithine and carbamoyl phosphate: step 1/3. In terms of biological role, has vitronectin and fibronectin-binding activity. The sequence is that of Ornithine carbamoyltransferase (argF) from Staphylococcus epidermidis.